The following is a 413-amino-acid chain: 4-hydroxy-3-methylbut-2-en-1-yl diphosphate synthase (flavodoxin) (413 aa).

[4Fe-4S] cluster is bound by residues cysteine 305, cysteine 308, cysteine 351, and glutamate 358.

This sequence belongs to the IspG family. The cofactor is [4Fe-4S] cluster.

The enzyme catalyses (2E)-4-hydroxy-3-methylbut-2-enyl diphosphate + oxidized [flavodoxin] + H2O + 2 H(+) = 2-C-methyl-D-erythritol 2,4-cyclic diphosphate + reduced [flavodoxin]. Its pathway is isoprenoid biosynthesis; isopentenyl diphosphate biosynthesis via DXP pathway; isopentenyl diphosphate from 1-deoxy-D-xylulose 5-phosphate: step 5/6. In terms of biological role, converts 2C-methyl-D-erythritol 2,4-cyclodiphosphate (ME-2,4cPP) into 1-hydroxy-2-methyl-2-(E)-butenyl 4-diphosphate. This Bartonella tribocorum (strain CIP 105476 / IBS 506) protein is 4-hydroxy-3-methylbut-2-en-1-yl diphosphate synthase (flavodoxin).